The primary structure comprises 362 residues: Chorismate synthase (362 aa).

The NADP(+) site is built by Arg48 and Arg54. FMN-binding positions include 131–133 (RSS), 243–244 (NA), Gly287, 302–306 (KPTSS), and Arg328.

This sequence belongs to the chorismate synthase family. In terms of assembly, homotetramer. FMNH2 serves as cofactor.

It carries out the reaction 5-O-(1-carboxyvinyl)-3-phosphoshikimate = chorismate + phosphate. The protein operates within metabolic intermediate biosynthesis; chorismate biosynthesis; chorismate from D-erythrose 4-phosphate and phosphoenolpyruvate: step 7/7. Its function is as follows. Catalyzes the anti-1,4-elimination of the C-3 phosphate and the C-6 proR hydrogen from 5-enolpyruvylshikimate-3-phosphate (EPSP) to yield chorismate, which is the branch point compound that serves as the starting substrate for the three terminal pathways of aromatic amino acid biosynthesis. This reaction introduces a second double bond into the aromatic ring system. In Bradyrhizobium diazoefficiens (strain JCM 10833 / BCRC 13528 / IAM 13628 / NBRC 14792 / USDA 110), this protein is Chorismate synthase.